Reading from the N-terminus, the 233-residue chain is Putative glutathione peroxidase 7, chloroplastic (233 aa).

The transit peptide at 1-69 (MAFSYASFST…KSKNFSVYAR (69 aa)) directs the protein to the chloroplast. Cys108 is a catalytic residue.

This sequence belongs to the glutathione peroxidase family.

It localises to the plastid. The protein resides in the chloroplast. It catalyses the reaction 2 glutathione + H2O2 = glutathione disulfide + 2 H2O. Functionally, may constitute a glutathione peroxidase-like protective system against oxidative stresses. The protein is Putative glutathione peroxidase 7, chloroplastic (GPX7) of Arabidopsis thaliana (Mouse-ear cress).